An 872-amino-acid chain; its full sequence is Alanine--tRNA ligase (872 aa).

Zn(2+) contacts are provided by His567, His571, Cys669, and His673.

The protein belongs to the class-II aminoacyl-tRNA synthetase family. Zn(2+) serves as cofactor.

It is found in the cytoplasm. It carries out the reaction tRNA(Ala) + L-alanine + ATP = L-alanyl-tRNA(Ala) + AMP + diphosphate. Functionally, catalyzes the attachment of alanine to tRNA(Ala) in a two-step reaction: alanine is first activated by ATP to form Ala-AMP and then transferred to the acceptor end of tRNA(Ala). Also edits incorrectly charged Ser-tRNA(Ala) and Gly-tRNA(Ala) via its editing domain. The protein is Alanine--tRNA ligase of Streptococcus thermophilus (strain ATCC BAA-491 / LMD-9).